A 209-amino-acid chain; its full sequence is Large ribosomal subunit protein uL3 (209 aa).

Residues 124 to 156 form a disordered region; that stretch reads KRHNFSGGQRTHGQSDRQRAPGSVGGSSDPSRV.

This sequence belongs to the universal ribosomal protein uL3 family. As to quaternary structure, part of the 50S ribosomal subunit. Forms a cluster with proteins L14 and L19.

In terms of biological role, one of the primary rRNA binding proteins, it binds directly near the 3'-end of the 23S rRNA, where it nucleates assembly of the 50S subunit. This Pelodictyon phaeoclathratiforme (strain DSM 5477 / BU-1) protein is Large ribosomal subunit protein uL3.